We begin with the raw amino-acid sequence, 173 residues long: Large ribosomal subunit protein uL29c (173 aa).

The transit peptide at 1–60 (MLSLSIATPGTAAIFRRGTASATSTSSSFHGVRIQHQVSARVPAAATISSSSPKPSVVMM) directs the protein to the chloroplast. The segment at 143–173 (KKSIVPRPPPSLKKLQEEEAAEEAAEAAKSA) is disordered. Ser-172 carries the phosphoserine modification.

Belongs to the universal ribosomal protein uL29 family. In terms of assembly, part of the 50S ribosomal subunit.

It localises to the plastid. The protein localises to the chloroplast. The protein is Large ribosomal subunit protein uL29c (RPL29) of Arabidopsis thaliana (Mouse-ear cress).